A 123-amino-acid polypeptide reads, in one-letter code: Guanine nucleotide exchange factor MSS4 (123 aa).

At Met1 the chain carries N-acetylmethionine. In terms of domain architecture, MSS4 spans 9 to 123 (ELVSAEGRNR…YVALERVSHE (115 aa)). Cys23, Cys26, Cys94, and Cys97 together coordinate Zn(2+).

It belongs to the DSS4/MSS4 family. As to quaternary structure, interacts with RAB8A. Ubiquitous.

Functionally, guanine-nucleotide-releasing protein that acts on members of the SEC4/YPT1/RAB subfamily. Stimulates GDP release from both YPT1, RAB3A and RAB10, but is less active on these proteins than on the SEC4 protein. Might play a general role in vesicular transport. The sequence is that of Guanine nucleotide exchange factor MSS4 (Rabif) from Rattus norvegicus (Rat).